The chain runs to 86 residues: Signal recognition particle 9 kDa protein (86 aa).

It belongs to the SRP9 family. Heterodimer with SRP14; binds RNA as heterodimer. Component of a signal recognition particle complex that consists of a 7SL RNA molecule of 300 nucleotides and six protein subunits: SRP72, SRP68, SRP54, SRP19, SRP14 and SRP9.

The protein localises to the cytoplasm. Its function is as follows. Component of the signal recognition particle (SRP) complex, a ribonucleoprotein complex that mediates the cotranslational targeting of secretory and membrane proteins to the endoplasmic reticulum (ER). SRP9 together with SRP14 and the Alu portion of the SRP RNA, constitutes the elongation arrest domain of SRP. The complex of SRP9 and SRP14 is required for SRP RNA binding. This chain is Signal recognition particle 9 kDa protein (Srp9), found in Mus musculus (Mouse).